The sequence spans 118 residues: MLRISSSSSMALKFSQILFIVLWLSLFFLLLHHLYSLNFRRLYSLNAVEPSLLKQHYRSYRLVSRKVLSDRFDFTPFHSRDNSRHNHRSGEQYDGDEIDPRYGVEKRRVPSGPNPLHH.

The signal sequence occupies residues 1-35; that stretch reads MLRISSSSSMALKFSQILFIVLWLSLFFLLLHHLY. 2 stretches are compositionally biased toward basic and acidic residues: residues 75-91 and 98-108; these read TPFH…RSGE and IDPRYGVEKRR. The tract at residues 75-118 is disordered; that stretch reads TPFHSRDNSRHNHRSGEQYDGDEIDPRYGVEKRRVPSGPNPLHH. 2 positions are modified to hydroxyproline: P110 and P113. Residue P113 is glycosylated (O-linked (Ara...) hydroxyproline).

This sequence belongs to the CLV3/ESR signal peptide family. The O-glycosylation (arabinosylation) of the hydroxyproline Pro-113 enhances binding affinity of the CLE12p peptide for its receptor. In terms of tissue distribution, mostly expressed in seedlings, roots, flowers, stems and apex, and, to a lower extent, in leaves and siliques.

It is found in the secreted. The protein localises to the extracellular space. Its function is as follows. Extracellular signal peptide that regulates cell fate. Represses root apical meristem maintenance. This chain is CLAVATA3/ESR (CLE)-related protein 12, found in Arabidopsis thaliana (Mouse-ear cress).